Reading from the N-terminus, the 584-residue chain is DNA ligase (584 aa).

Residue E249 coordinates ATP. K251 (N6-AMP-lysine intermediate) is an active-site residue. ATP is bound by residues R256, R271, E301, F341, R416, and K422.

The protein belongs to the ATP-dependent DNA ligase family. Mg(2+) is required as a cofactor.

The catalysed reaction is ATP + (deoxyribonucleotide)n-3'-hydroxyl + 5'-phospho-(deoxyribonucleotide)m = (deoxyribonucleotide)n+m + AMP + diphosphate.. Functionally, DNA ligase that seals nicks in double-stranded DNA during DNA replication, DNA recombination and DNA repair. The polypeptide is DNA ligase (Pyrobaculum neutrophilum (strain DSM 2338 / JCM 9278 / NBRC 100436 / V24Sta) (Thermoproteus neutrophilus)).